The following is a 587-amino-acid chain: Arginine--tRNA ligase (587 aa).

The short motif at Ala127–His137 is the 'HIGH' region element.

This sequence belongs to the class-I aminoacyl-tRNA synthetase family. Monomer.

Its subcellular location is the cytoplasm. The catalysed reaction is tRNA(Arg) + L-arginine + ATP = L-arginyl-tRNA(Arg) + AMP + diphosphate. This chain is Arginine--tRNA ligase, found in Dechloromonas aromatica (strain RCB).